A 212-amino-acid polypeptide reads, in one-letter code: Urease accessory protein UreG (212 aa).

19 to 26 (GPVGSGKT) is a binding site for GTP.

Belongs to the SIMIBI class G3E GTPase family. UreG subfamily. As to quaternary structure, homodimer. UreD, UreF and UreG form a complex that acts as a GTP-hydrolysis-dependent molecular chaperone, activating the urease apoprotein by helping to assemble the nickel containing metallocenter of UreC. The UreE protein probably delivers the nickel.

It is found in the cytoplasm. In terms of biological role, facilitates the functional incorporation of the urease nickel metallocenter. This process requires GTP hydrolysis, probably effectuated by UreG. The chain is Urease accessory protein UreG from Vibrio parahaemolyticus.